We begin with the raw amino-acid sequence, 106 residues long: Starvation responsive small protein A (106 aa).

A helical membrane pass occupies residues 15–32 (ILLVNAGLISAYGVRIIF).

Its subcellular location is the cell membrane. Its function is as follows. Involved in starvation response and aggregation stage of the life cycle. May be involved in fruiting body morphogenesis and spore formation. In Dictyostelium discoideum (Social amoeba), this protein is Starvation responsive small protein A.